The chain runs to 216 residues: Somatotropin (216 aa).

The signal sequence occupies residues 1–26; that stretch reads MAAGPRTSVLLAFGLLCLPWPQDVGA. A Zn(2+)-binding site is contributed by H45. An intrachain disulfide couples C78 to C189. S131 carries the phosphoserine modification. E198 contacts Zn(2+). C206 and C214 form a disulfide bridge.

It belongs to the somatotropin/prolactin family.

It is found in the secreted. Plays an important role in growth control. Its major role in stimulating body growth is to stimulate the liver and other tissues to secrete IGF1. It stimulates both the differentiation and proliferation of myoblasts. It also stimulates amino acid uptake and protein synthesis in muscle and other tissues. This Equus caballus (Horse) protein is Somatotropin (GH1).